Consider the following 713-residue polypeptide: Cyclomaltodextrin glucanotransferase (713 aa).

Positions 1–27 are cleaved as a signal peptide; sequence MKKQVKWLTSVSMSVGIALGAALPVWA. Residues 28 to 165 form an A1 region; the sequence is SPDTSVNNKL…NIKVVMDFAP (138 aa). Ca(2+) is bound by residues D54, N56, N59, N60, G78, and D80. Substrate is bound at residue 127-128; sequence YW. N166 contacts Ca(2+). The tract at residues 166–229 is b; sequence NHTNPASSTD…NLYDLADINQ (64 aa). H167 contributes to the substrate binding site. I217 is a Ca(2+) binding site. Residue 220-223 participates in substrate binding; that stretch reads NLYD. D226 contacts Ca(2+). Residues 230–434 form an A2 region; it reads NNNTIDSYLK…LRKSNPALAY (205 aa). A substrate-binding site is contributed by R254. D256 (nucleophile) is an active-site residue. 259-260 provides a ligand contact to substrate; the sequence is KH. H260 lines the Ca(2+) pocket. E285 serves as the catalytic Proton donor. Residues H355, D399, and R403 each contribute to the substrate site. A c region spans residues 435–522; it reads GSTTQRWVNS…GTAVWQYTTT (88 aa). Residues 523 to 609 are d; it reads ESSPIIGNVG…SAAFNNFNVL (87 aa). In terms of domain architecture, IPT/TIG spans 526–606; sequence PIIGNVGPTM…GTTSAAFNNF (81 aa). Positions 608–713 constitute a CBM20 domain; that stretch reads VLTADQVTVR…VATVTVDWQN (106 aa). The interval 610-713 is e; that stretch reads TADQVTVRFK…VATVTVDWQN (104 aa).

Belongs to the glycosyl hydrolase 13 family. In terms of assembly, monomer. The cofactor is Ca(2+).

Its subcellular location is the secreted. The catalysed reaction is Cyclizes part of a (1-&gt;4)-alpha-D-glucan chain by formation of a (1-&gt;4)-alpha-D-glucosidic bond.. This is Cyclomaltodextrin glucanotransferase from Paenibacillus macerans (Bacillus macerans).